A 671-amino-acid chain; its full sequence is K(+)-insensitive pyrophosphate-energized proton pump (671 aa).

5 consecutive transmembrane segments (helical) span residues 3 to 23 (SLIFIAPLAGVISLVFAAFFA), 57 to 77 (TIAVVSIILSFLILFLLDDGL), 79 to 99 (IAIGFLAGAISSAAAGYIGMS), 128 to 148 (AVTGLAVVGLALLGTSSFYIL), and 156 to 176 (VGFGFGASLISLFARVGGGIF). Lys-178 serves as a coordination point for substrate. Mg(2+)-binding residues include Asp-181, Asp-185, Asn-208, and Asp-211. Helical transmembrane passes span 223 to 243 (LFETYVVTSLAAMLLGSLIIG), 249 to 269 (ILYPLVLGSVAIFASIISVFF), 285 to 305 (GVGGSAIISLIAFYFVTNSLM), 310 to 330 (LFYATVVGIIITVLMVIITEY), 366 to 386 (LVPTVVIVIGILISYFIVGGA), and 391 to 411 (IGLYGIAIAAVAMLSTTGMIV). A Mg(2+)-binding site is contributed by Asp-421. The next 4 helical transmembrane spans lie at 452–472 (AVTKGYAIGSAALGALALFAD), 490–510 (VVLAGLLLGALLPFVFSAVTM), 558–578 (MAMPGFLAVLVPLLVGLILGP), and 580–600 (ALAGLLIGLIVVGFMLALMMD). Ca(2+) is bound by residues Asp-607, Asp-633, and Asp-637. A substrate-binding site is contributed by Lys-640. The helical transmembrane segment at 646–666 (ALNALIKVVNMVAILFSSLII) threads the bilayer.

This sequence belongs to the H(+)-translocating pyrophosphatase (TC 3.A.10) family. K(+)-insensitive subfamily. In terms of assembly, homodimer. Mg(2+) is required as a cofactor.

The protein localises to the cell membrane. It carries out the reaction diphosphate + H2O + H(+)(in) = 2 phosphate + 2 H(+)(out). Proton pump that utilizes the energy of pyrophosphate hydrolysis as the driving force for proton movement across the membrane. Generates a proton motive force. This is K(+)-insensitive pyrophosphate-energized proton pump from Methanosarcina acetivorans (strain ATCC 35395 / DSM 2834 / JCM 12185 / C2A).